The following is a 275-amino-acid chain: Dermonecrotic toxin SpeSicTox-betaIIA3i (275 aa).

His-5 is a catalytic residue. Residues Glu-25 and Asp-27 each contribute to the Mg(2+) site. Residue His-41 is the Nucleophile of the active site. Intrachain disulfides connect Cys-45–Cys-51 and Cys-47–Cys-190. A Mg(2+)-binding site is contributed by Asp-85.

The protein belongs to the arthropod phospholipase D family. Class II subfamily. Mg(2+) is required as a cofactor. In terms of tissue distribution, expressed by the venom gland.

The protein resides in the secreted. It carries out the reaction an N-(acyl)-sphingosylphosphocholine = an N-(acyl)-sphingosyl-1,3-cyclic phosphate + choline. The catalysed reaction is an N-(acyl)-sphingosylphosphoethanolamine = an N-(acyl)-sphingosyl-1,3-cyclic phosphate + ethanolamine. The enzyme catalyses a 1-acyl-sn-glycero-3-phosphocholine = a 1-acyl-sn-glycero-2,3-cyclic phosphate + choline. It catalyses the reaction a 1-acyl-sn-glycero-3-phosphoethanolamine = a 1-acyl-sn-glycero-2,3-cyclic phosphate + ethanolamine. Functionally, dermonecrotic toxins cleave the phosphodiester linkage between the phosphate and headgroup of certain phospholipids (sphingolipid and lysolipid substrates), forming an alcohol (often choline) and a cyclic phosphate. This toxin acts on sphingomyelin (SM). It may also act on ceramide phosphoethanolamine (CPE), lysophosphatidylcholine (LPC) and lysophosphatidylethanolamine (LPE), but not on lysophosphatidylserine (LPS), and lysophosphatidylglycerol (LPG). It acts by transphosphatidylation, releasing exclusively cyclic phosphate products as second products. Induces dermonecrosis, hemolysis, increased vascular permeability, edema, inflammatory response, and platelet aggregation. This chain is Dermonecrotic toxin SpeSicTox-betaIIA3i, found in Sicarius peruensis (Six-eyed sand spider).